Reading from the N-terminus, the 486-residue chain is Cardiolipin synthase A (486 aa).

2 helical membrane passes run 3 to 23 and 38 to 58; these read TFYT…IAGV and MAWL…YLSF. PLD phosphodiesterase domains follow at residues 219–246 and 399–426; these read MDLR…VDPR and EGGL…DMRS. Residues His224, Lys226, Asp231, His404, Lys406, and Asp411 contribute to the active site.

The protein belongs to the phospholipase D family. Cardiolipin synthase subfamily. ClsA sub-subfamily.

The protein localises to the cell inner membrane. It carries out the reaction 2 a 1,2-diacyl-sn-glycero-3-phospho-(1'-sn-glycerol) = a cardiolipin + glycerol. Catalyzes the reversible phosphatidyl group transfer from one phosphatidylglycerol molecule to another to form cardiolipin (CL) (diphosphatidylglycerol) and glycerol. This is Cardiolipin synthase A from Klebsiella pneumoniae (strain 342).